Here is a 476-residue protein sequence, read N- to C-terminus: Bifunctional protein HldE (476 aa).

The interval 1 to 319 is ribokinase; it reads MKISLPAFEK…AALNLSHGES (319 aa). Residue 195-198 participates in ATP binding; sequence NMSE. Asp-264 is a catalytic residue. The segment at 345 to 476 is cytidylyltransferase; it reads MTNGCFDILH…AIIENIMAKQ (132 aa).

The protein in the N-terminal section; belongs to the carbohydrate kinase PfkB family. In the C-terminal section; belongs to the cytidylyltransferase family. Homodimer.

The catalysed reaction is D-glycero-beta-D-manno-heptose 7-phosphate + ATP = D-glycero-beta-D-manno-heptose 1,7-bisphosphate + ADP + H(+). It carries out the reaction D-glycero-beta-D-manno-heptose 1-phosphate + ATP + H(+) = ADP-D-glycero-beta-D-manno-heptose + diphosphate. Its pathway is nucleotide-sugar biosynthesis; ADP-L-glycero-beta-D-manno-heptose biosynthesis; ADP-L-glycero-beta-D-manno-heptose from D-glycero-beta-D-manno-heptose 7-phosphate: step 1/4. It functions in the pathway nucleotide-sugar biosynthesis; ADP-L-glycero-beta-D-manno-heptose biosynthesis; ADP-L-glycero-beta-D-manno-heptose from D-glycero-beta-D-manno-heptose 7-phosphate: step 3/4. Functionally, catalyzes the phosphorylation of D-glycero-D-manno-heptose 7-phosphate at the C-1 position to selectively form D-glycero-beta-D-manno-heptose-1,7-bisphosphate. Catalyzes the ADP transfer from ATP to D-glycero-beta-D-manno-heptose 1-phosphate, yielding ADP-D-glycero-beta-D-manno-heptose. The protein is Bifunctional protein HldE of Shewanella loihica (strain ATCC BAA-1088 / PV-4).